Reading from the N-terminus, the 315-residue chain is Shiga-like toxin 1 subunit A (315 aa).

Residues 1-22 form the signal peptide; it reads MKIIIFRVLTFFFVIFSVNVVA. The interval 23 to 273 is A1; the sequence is KEFTLDFSTA…CHHHASRVAR (251 aa). Residue Glu189 is part of the active site. Cysteines 264 and 283 form a disulfide. Residues 274–315 form an A2 region; the sequence is MASDEFPSMCPADGRVRGITHNKILWDSSTLGAILMRRTISS.

The protein belongs to the ribosome-inactivating protein family. Shiga-like toxin contains a single subunit A and five copies of subunit B.

Its subcellular location is the secreted. It carries out the reaction Endohydrolysis of the N-glycosidic bond at one specific adenosine on the 28S rRNA.. Functionally, the A subunit is responsible for inhibiting protein synthesis through the catalytic inactivation of 60S ribosomal subunits. After endocytosis, the A subunit is cleaved by furin in two fragments, A1 and A2: A1 is the catalytically active fragment, and A2 is essential for holotoxin assembly with the B subunits. The chain is Shiga-like toxin 1 subunit A (stxA) from Escherichia coli (Bacteriophage H19B).